Reading from the N-terminus, the 505-residue chain is Maturase K (505 aa).

This sequence belongs to the intron maturase 2 family. MatK subfamily.

It is found in the plastid. The protein localises to the chloroplast. Functionally, usually encoded in the trnK tRNA gene intron. Probably assists in splicing its own and other chloroplast group II introns. In Blitum bonus-henricus (Good King Henry), this protein is Maturase K.